Reading from the N-terminus, the 77-residue chain is uncharacterized protein (77 aa).

The span at 1-10 (MFNNKGRRNV) shows a compositional bias: basic residues. A disordered region spans residues 1-21 (MFNNKGRRNVRNNEVRRNVPV). Residues 11–21 (RNNEVRRNVPV) are compositionally biased toward basic and acidic residues. The TRAM domain maps to 20–77 (PVKEGETYTVTIEDMGRGGDGIARVEGFVVFVPETQKGETVNVKITAVKSKFAFAEKI).

This is an uncharacterized protein from Methanocaldococcus jannaschii (strain ATCC 43067 / DSM 2661 / JAL-1 / JCM 10045 / NBRC 100440) (Methanococcus jannaschii).